The following is a 399-amino-acid chain: S-adenosylmethionine synthase (399 aa).

H19 is an ATP binding site. A Mg(2+)-binding site is contributed by D21. Position 47 (E47) interacts with K(+). L-methionine is bound by residues E60 and Q103. The flexible loop stretch occupies residues 103–113; it reads QSPDIAQGVNQ. ATP contacts are provided by residues 179–181, 246–247, D255, 261–262, A278, and K282; these read DGK, RF, and RK. D255 is an L-methionine binding site. An L-methionine-binding site is contributed by K286.

This sequence belongs to the AdoMet synthase family. Homotetramer; dimer of dimers. Requires Mg(2+) as cofactor. K(+) serves as cofactor.

The protein resides in the cytoplasm. It catalyses the reaction L-methionine + ATP + H2O = S-adenosyl-L-methionine + phosphate + diphosphate. It functions in the pathway amino-acid biosynthesis; S-adenosyl-L-methionine biosynthesis; S-adenosyl-L-methionine from L-methionine: step 1/1. Functionally, catalyzes the formation of S-adenosylmethionine (AdoMet) from methionine and ATP. The overall synthetic reaction is composed of two sequential steps, AdoMet formation and the subsequent tripolyphosphate hydrolysis which occurs prior to release of AdoMet from the enzyme. In Halalkalibacterium halodurans (strain ATCC BAA-125 / DSM 18197 / FERM 7344 / JCM 9153 / C-125) (Bacillus halodurans), this protein is S-adenosylmethionine synthase.